Here is a 328-residue protein sequence, read N- to C-terminus: P2Y purinoceptor 3 (328 aa).

Over 1-22 (MSMANFTAGRNSCTFQEEFKQV) the chain is Extracellular. An N-linked (GlcNAc...) asparagine glycan is attached at Asn5. Residues 23-43 (LLPLVYSVVFLLGLPLNAVVI) form a helical membrane-spanning segment. Residues 44–57 (GQIWLARKALTRTT) lie on the Cytoplasmic side of the membrane. The helical transmembrane segment at 58 to 78 (IYMLNLATADLLYVCSLPLLI) threads the bilayer. Over 79 to 96 (YNYTQKDYWPFGDFTCKF) the chain is Extracellular. Cys94 and Cys172 are disulfide-bonded. A helical transmembrane segment spans residues 97 to 117 (VRFQFYTNLHGSILFLTCISV). Residues 118 to 139 (QRYMGICHPLASWHKKKGKKLT) lie on the Cytoplasmic side of the membrane. The chain crosses the membrane as a helical span at residues 140–160 (WLVCAAVWFIVIAQCLPTFVF). The Extracellular segment spans residues 161–189 (ASTGTQRNRTVCYDLSPPDRSASYFPYGI). A helical membrane pass occupies residues 190 to 210 (TLTITGFLLPFAAILACYCSM). The Cytoplasmic segment spans residues 211-231 (ARILCQKDELIGLAVHKKKDK). The helical transmembrane segment at 232 to 252 (AVRMIIIVVIVFSISFFPFHL) threads the bilayer. Topologically, residues 253-275 (TKTIYLIVRSSPTLPCPTLQAFA) are extracellular. A helical membrane pass occupies residues 276–298 (IAYKCTRPFASMNSVLDPILFYF). At 299 to 323 (TQRKFRESTRYLLDKMSSKWRHDHC) the chain is on the cytoplasmic side.

It belongs to the G-protein coupled receptor 1 family.

It localises to the cell membrane. Receptor for extracellular UDP &gt; ADP = UTP. The activity of this receptor is mediated by G proteins which activate a phosphatidylinositol-calcium second messenger system. This is P2Y purinoceptor 3 (P2RY3) from Meleagris gallopavo (Wild turkey).